The sequence spans 422 residues: uncharacterized protein (422 aa).

A signal peptide spans Met-1 to Ala-23.

As to expression, component of the acid-insoluble organic matrix of the aragonitic skeleton (at protein level).

Its subcellular location is the secreted. This is an uncharacterized protein from Acropora millepora (Staghorn coral).